A 455-amino-acid polypeptide reads, in one-letter code: Bifunctional protein GlmU (455 aa).

The tract at residues 1–227 (MDSLSIVILA…SWEAAGVNNK (227 aa)) is pyrophosphorylase. Residues 9–12 (LAAG), lysine 23, glutamine 74, 79–80 (GT), 101–103 (YGD), glycine 137, glutamate 152, asparagine 167, and asparagine 225 each bind UDP-N-acetyl-alpha-D-glucosamine. Aspartate 103 is a binding site for Mg(2+). A Mg(2+)-binding site is contributed by asparagine 225. The segment at 228 to 248 (VQLAELERILQANQARALLEA) is linker. Positions 249 to 455 (GVTLADPARI…GWKRPQKKSG (207 aa)) are N-acetyltransferase. Residues arginine 331 and lysine 349 each coordinate UDP-N-acetyl-alpha-D-glucosamine. Histidine 361 (proton acceptor) is an active-site residue. Positions 364 and 375 each coordinate UDP-N-acetyl-alpha-D-glucosamine. Residues alanine 378, 384–385 (NY), serine 403, alanine 421, and arginine 438 contribute to the acetyl-CoA site.

In the N-terminal section; belongs to the N-acetylglucosamine-1-phosphate uridyltransferase family. It in the C-terminal section; belongs to the transferase hexapeptide repeat family. Homotrimer. Mg(2+) is required as a cofactor.

The protein resides in the cytoplasm. The catalysed reaction is alpha-D-glucosamine 1-phosphate + acetyl-CoA = N-acetyl-alpha-D-glucosamine 1-phosphate + CoA + H(+). The enzyme catalyses N-acetyl-alpha-D-glucosamine 1-phosphate + UTP + H(+) = UDP-N-acetyl-alpha-D-glucosamine + diphosphate. It functions in the pathway nucleotide-sugar biosynthesis; UDP-N-acetyl-alpha-D-glucosamine biosynthesis; N-acetyl-alpha-D-glucosamine 1-phosphate from alpha-D-glucosamine 6-phosphate (route II): step 2/2. Its pathway is nucleotide-sugar biosynthesis; UDP-N-acetyl-alpha-D-glucosamine biosynthesis; UDP-N-acetyl-alpha-D-glucosamine from N-acetyl-alpha-D-glucosamine 1-phosphate: step 1/1. The protein operates within bacterial outer membrane biogenesis; LPS lipid A biosynthesis. Functionally, catalyzes the last two sequential reactions in the de novo biosynthetic pathway for UDP-N-acetylglucosamine (UDP-GlcNAc). The C-terminal domain catalyzes the transfer of acetyl group from acetyl coenzyme A to glucosamine-1-phosphate (GlcN-1-P) to produce N-acetylglucosamine-1-phosphate (GlcNAc-1-P), which is converted into UDP-GlcNAc by the transfer of uridine 5-monophosphate (from uridine 5-triphosphate), a reaction catalyzed by the N-terminal domain. The protein is Bifunctional protein GlmU of Chromobacterium violaceum (strain ATCC 12472 / DSM 30191 / JCM 1249 / CCUG 213 / NBRC 12614 / NCIMB 9131 / NCTC 9757 / MK).